The chain runs to 147 residues: MADFDAVLKCWGPVEADFNTVGGMVLARLFKDHPDTQKLFPKFAGIAAGDLAGNAAVAAHGGTVLKKLGELLKAKGNHAAIIKPLANSHATKHKIPINNFKLITEALVHVMQEKAGLDAAGQTALRNVMGIVIADLEANYKELGFTG.

A Globin domain is found at 2 to 141 (ADFDAVLKCW…VIADLEANYK (140 aa)). His-60 serves as a coordination point for nitrite. An O2-binding site is contributed by His-60. His-89 is a binding site for heme b.

The protein belongs to the globin family. As to quaternary structure, monomeric.

It is found in the cytoplasm. It localises to the sarcoplasm. The catalysed reaction is Fe(III)-heme b-[protein] + nitric oxide + H2O = Fe(II)-heme b-[protein] + nitrite + 2 H(+). It catalyses the reaction H2O2 + AH2 = A + 2 H2O. Monomeric heme protein which primary function is to store oxygen and facilitate its diffusion within muscle tissues. Reversibly binds oxygen through a pentacoordinated heme iron and enables its timely and efficient release as needed during periods of heightened demand. Depending on the oxidative conditions of tissues and cells, and in addition to its ability to bind oxygen, it also has a nitrite reductase activity whereby it regulates the production of bioactive nitric oxide. Under stress conditions, like hypoxia and anoxia, it also protects cells against reactive oxygen species thanks to its pseudoperoxidase activity. This is Myoglobin (mb) from Auxis rochei (Bullet tuna).